A 127-amino-acid polypeptide reads, in one-letter code: DNA-directed RNA polymerases I, II, and III subunit RPABC2 (127 aa).

Acidic residues predominate over residues 1–34 (MSDNEDNFDGDDFDDVEEDEGLDDLENAEEEGQE). Residues 1–53 (MSDNEDNFDGDDFDDVEEDEGLDDLENAEEEGQENVEILPSGERPQANQKRIT) form a disordered region. Serine 2 carries the N-acetylserine modification. Serine 2 carries the phosphoserine; by CK2 modification.

The protein belongs to the archaeal Rpo6/eukaryotic RPB6 RNA polymerase subunit family. As to quaternary structure, component of the RNA polymerase I (Pol I), RNA polymerase II (Pol II) and RNA polymerase III (Pol III) complexes consisting of at least 13, 12 and 17 subunits, respectively. Pol I complex consists of a ten-subunit catalytic core composed of POLR1A/RPA1, POLR1B/RPA2, POLR1C/RPAC1, POLR1D/RPAC2, POLR1H/RPA12, POLR2E/RPABC1, POLR2F/RPABC2, POLR2H/RPABC3, POLR2K/RPABC4 and POLR2L/RPABC5; a mobile stalk subunit POLR1F/RPA43 protruding from the core and additional subunits homologous to general transcription factors POLR1E/RPA49 and POLR1G/RPA34. Part of Pol I pre-initiation complex (PIC), in which Pol I core assembles with RRN3 and promoter-bound UTBF and SL1/TIF-IB complex. Pol II complex contains a ten-subunit catalytic core composed of POLR2A/RPB1, POLR2B/RPB2, POLR2C/RPB3, POLR2I/RPB9, POLR2J/RPB11, POLR2E/RPABC1, POLR2F/RPABC2, POLR2H/RPABC3, POLR2K/RPABC4 and POLR2L/RPABC5 and a mobile stalk composed of two subunits POLR2D/RPB4 and POLR2G/RPB7. Part of Pol II(G) complex, in which Pol II core associates with an additional subunit POLR2M; unlike conventional Pol II, Pol II(G) functions as a transcriptional repressor. Part of TBP-based Pol II pre-initiation complex (PIC), in which Pol II core assembles with general transcription factors and other specific initiation factors including GTF2E1, GTF2E2, GTF2F1, GTF2F2, TCEA1, ERCC2, ERCC3, GTF2H2, GTF2H3, GTF2H4, GTF2H5, GTF2A1, GTF2A2, GTF2B and TBP; this large multi-subunit PIC complex mediates DNA unwinding and targets Pol II core to the transcription start site where the first phosphodiester bond forms. Pol III complex consists of a ten-subunit catalytic core composed of POLR3A/RPC1, POLR3B/RPC2, POLR1C/RPAC1, POLR1D/RPAC2, POLR3K/RPC10, POLR2E/RPABC1, POLR2F/RPABC2, POLR2H/RPABC3, POLR2K/RPABC4 and POLR2L/RPABC5; a mobile stalk composed of two subunits POLR3H/RPC8 and CRCP/RPC9, protruding from the core and functioning primarily in transcription initiation; and additional subunits homologous to general transcription factors of the RNA polymerase II machinery, POLR3C/RPC3-POLR3F/RPC6-POLR3G/RPC7 heterotrimer required for transcription initiation and POLR3D/RPC4-POLR3E/RPC5 heterodimer involved in both transcription initiation and termination.

The protein localises to the nucleus. It localises to the nucleolus. In terms of biological role, DNA-dependent RNA polymerase catalyzes the transcription of DNA into RNA using the four ribonucleoside triphosphates as substrates. Common component of RNA polymerases I, II, and III which synthesize ribosomal RNA precursors, mRNA precursors and many functional non-coding RNAs, and small RNAs, such as 5S rRNA and tRNAs, respectively. Pol II is the central component of the basal RNA polymerase II transcription machinery. Pols are composed of mobile elements that move relative to each other. In Pol II, POLR2F/RPABC2 is part of the clamp element and together with parts of POLR2A/RPB1 and POLR2B/RPB2 forms a pocket to which the POLR2D/RPB4-POLR2G/RPB7 subcomplex binds. This Mus musculus (Mouse) protein is DNA-directed RNA polymerases I, II, and III subunit RPABC2.